The following is a 97-amino-acid chain: Co-chaperonin GroES (97 aa).

The protein belongs to the GroES chaperonin family. As to quaternary structure, heptamer of 7 subunits arranged in a ring. Interacts with the chaperonin GroEL.

Its subcellular location is the cytoplasm. Functionally, together with the chaperonin GroEL, plays an essential role in assisting protein folding. The GroEL-GroES system forms a nano-cage that allows encapsulation of the non-native substrate proteins and provides a physical environment optimized to promote and accelerate protein folding. GroES binds to the apical surface of the GroEL ring, thereby capping the opening of the GroEL channel. This is Co-chaperonin GroES from Photorhabdus laumondii subsp. laumondii (strain DSM 15139 / CIP 105565 / TT01) (Photorhabdus luminescens subsp. laumondii).